The primary structure comprises 327 residues: Beta-1,4-galactosyltransferase 7 (327 aa).

The Cytoplasmic segment spans residues 1–30 (MLPSRRKAAQLPWEDGRARLLPGGLRRKCS). Residues 31–51 (IFHLFIAFLLLVFFSLLWLQL) traverse the membrane as a helical; Signal-anchor for type II membrane protein segment. The Lumenal segment spans residues 52-327 (SCSGDMAQVT…KTATPWCIFG (276 aa)). The interval 61–88 (TRGQGQETSGPPRACPPEPPPEHWEEDE) is disordered. Residues 100-104 (PFRER) and 139-141 (FNR) contribute to the UDP-alpha-D-galactose site. N-linked (GlcNAc...) asparagine glycosylation occurs at N154. Residues 164–165 (VD), Y194, and W224 contribute to the UDP-alpha-D-galactose site. Residue D165 coordinates Mn(2+). 226–229 (REDD) lines the N-acetyl-D-glucosamine pocket. H257 contributes to the Mn(2+) binding site. UDP-alpha-D-galactose contacts are provided by residues 257–259 (HLH) and R266.

Belongs to the glycosyltransferase 7 family. It depends on Mn(2+) as a cofactor.

Its subcellular location is the golgi apparatus. The protein localises to the golgi stack membrane. The enzyme catalyses 3-O-(beta-D-xylosyl)-L-seryl-[protein] + UDP-alpha-D-galactose = 3-O-(beta-D-galactosyl-(1-&gt;4)-beta-D-xylosyl)-L-seryl-[protein] + UDP + H(+). Its pathway is protein modification; protein glycosylation. In terms of biological role, required for the biosynthesis of the tetrasaccharide linkage region of proteoglycans, especially for small proteoglycans in skin fibroblasts. The sequence is that of Beta-1,4-galactosyltransferase 7 (B4galt7) from Mus musculus (Mouse).